The following is a 151-amino-acid chain: Large ribosomal subunit protein uL15 (151 aa).

Residues 1–51 form a disordered region; that stretch reads MKSLRLEDAVPQSGSRHRKLRVGRGHSAGQGKTSGRGMRGQKCRSGGGVRP. The segment covering 15–24 has biased composition (basic residues); the sequence is SRHRKLRVGR. A compositionally biased stretch (gly residues) spans 26–38; the sequence is HSAGQGKTSGRGM.

Belongs to the universal ribosomal protein uL15 family. Part of the 50S ribosomal subunit.

Binds to the 23S rRNA. The protein is Large ribosomal subunit protein uL15 of Gloeobacter violaceus (strain ATCC 29082 / PCC 7421).